Reading from the N-terminus, the 332-residue chain is MPFWYSNSKLIWLLSPFSLLFWLISQLRHALFCLGIKSSYRAPKPVIIVGNLSVGGNGKTPVVVWLVEELKKRGLRVGVISRGYGSKSKTYPLFVTENTRPIEGGDEPVLIAKRTNAPVVISPNRQQAIELLLSQAECDIIVSDDGLQHYKLQRDLEIVVMDAERALGNGFVLPAGPLRELPSRLKSVDFVITNGGKNQYSDAVMYLVPHFAINLKTNEKRQLKEFQSGVAIAGIGNPQRFFTMLEKLGIQLERTQAFQDHQHFEASQLEKLAENQPLFMTEKDAVKCQSFANDNWWYVPVDAEIIEAEKQCENLPHFWDKIDKLVAQYRNG.

Residue 53-60 participates in ATP binding; the sequence is SVGGNGKT.

This sequence belongs to the LpxK family.

The catalysed reaction is a lipid A disaccharide + ATP = a lipid IVA + ADP + H(+). The protein operates within glycolipid biosynthesis; lipid IV(A) biosynthesis; lipid IV(A) from (3R)-3-hydroxytetradecanoyl-[acyl-carrier-protein] and UDP-N-acetyl-alpha-D-glucosamine: step 6/6. Transfers the gamma-phosphate of ATP to the 4'-position of a tetraacyldisaccharide 1-phosphate intermediate (termed DS-1-P) to form tetraacyldisaccharide 1,4'-bis-phosphate (lipid IVA). The protein is Tetraacyldisaccharide 4'-kinase of Haemophilus influenzae (strain 86-028NP).